Consider the following 483-residue polypeptide: Zinc metalloproteinase/disintegrin VMP-II (483 aa).

A signal peptide spans 1–20 (MIQVLLVTLCLAAFPYQGNS). The propeptide occupies 21–191 (IILESGNVND…KASQLNLTPE (171 aa)). Residues 198-394 (RYIELVVVAD…HNPQCMLNEP (197 aa)) enclose the Peptidase M12B domain. The Ca(2+) site is built by Glu-201 and Asp-285. Intrachain disulfides connect Cys-309-Cys-389, Cys-349-Cys-373, and Cys-351-Cys-356. Residue His-334 participates in Zn(2+) binding. The active site involves Glu-335. Residues His-338 and His-344 each contribute to the Zn(2+) site. Residues Cys-389 and Asn-392 each contribute to the Ca(2+) site. Positions 395–414 (LRTDIVSTPVSGNELWETGE) are excised as a propeptide. One can recognise a Disintegrin domain in the interval 402–483 (TPVSGNELWE…AGCPRNPFHA (82 aa)). Intrachain disulfides connect Cys-425–Cys-448, Cys-439–Cys-445, Cys-444–Cys-469, and Cys-457–Cys-476. A Cell attachment site; atypical (KGD) motif is present at residues 461–463 (KGD).

It belongs to the venom metalloproteinase (M12B) family. P-II subfamily. P-IIe sub-subfamily. As to quaternary structure, heterodimer; disulfide-linked (disintegrin). The cofactor is Zn(2+). Expressed by the venom gland.

The protein resides in the secreted. With respect to regulation, inhibited by EDTA and 1,10-phenanthroline, but not by PMSF. Its function is as follows. Has fibrinolytic activity. The recombinant enzyme cleaves both alpha- (FGA) and beta-chains (FGB) of fibrinogen, but not the gamma-chain. The recombinant protein does not produce hemorrhage in mice and does not have effect on ADP- or collagen-stimulated platelet aggregation. In terms of biological role, inhibits platelet aggregation induced by ADP, thrombin, platelet-activating factor and collagen. Acts by inhibiting fibrinogen interaction with platelet receptors GPIIb/GPIIIa (ITGA2B/ITGB3). This Agkistrodon piscivorus leucostoma (Western cottonmouth) protein is Zinc metalloproteinase/disintegrin VMP-II.